Here is an 872-residue protein sequence, read N- to C-terminus: Adhesive plaque matrix protein (872 aa).

An N-terminal signal peptide occupies residues 1–20 (MEGIKLNLCLLCIFSCDIFA). Positions 21–41 (LSNGNIHNVYGSAYSGASAGA) are nonrepetitive linker. Repeat copies occupy residues 124–133 (YKAKTSYPPS), 134–143 (YKHKITYPPT), 144–153 (YKPKITYPPT), 154–163 (YKQKPSYPPS), 174–183 (YKPKITYPPT), 184–192 (YKRKPSYTP), 193–202 (YKPKATYPPT), 203–212 (YKPKITYPPT), 213–221 (YKRKPSYTP), 222–231 (YKPKTTYPPT), 232–241 (YKPKISYPSI), 242–251 (YKPKASYVSS), 252–261 (YKSKKTYPPT), 262–271 (YKPKISYPPT), 272–281 (YKPKPSYPPT), 282–291 (YKPKVTYPPT), 292–301 (YKPKPSYPPT), 302–311 (YKPKITYPPT), 312–321 (YKPKPSYPTP), 322–331 (YKQKPSYPPI), 332–341 (YKSKSSYPTS), 342–351 (YKSKKTYPPT), 352–361 (YKPKITYPPT), 362–371 (YKPKPSYPPS), 372–381 (YKPKKTYSPT), 382–391 (YKPKITYPPT), 402–411 (YKPKTTYPPT), 412–421 (YKPKISYPPT), 422–431 (YKPKASYVSS), 432–441 (YKSKKTYPPT), 442–451 (YKPKISYPPT), 452–461 (YKPKPSYPPT), 462–471 (YKPKITYPPT), 472–481 (YKPKPSYPPT), 482–491 (YKPKITYPPT), 502–511 (YKQKPSYPPI), 512–521 (YKSKSSYPTS), 522–531 (YKSKKTYPPT), 532–541 (YKPKITYPPT), 542–551 (YKPKPSYPPS), 552–561 (YKPKTTYPPT), 562–571 (YKPKIRYPPT), 572–581 (YKPKASYPPT), 582–591 (YKPKITYPPT), 602–611 (YKQKPSYPPI), 612–621 (YKSKSSYPTA), 622–631 (YKSKKTYPPT), 632–641 (YKPKITYPPT), 642–651 (YKPKPSYPPS), 652–661 (YRPKITYPPT), 662–671 (YKPKKSYPQA), 672–681 (YKSKGSYPPS), 682–691 (YQPKKTYPPS), 702–711 (YKPKISYPPT), 712–721 (YKTKPSYPAS), 722–731 (YKRKTSYPPT), 732–741 (YKPKISYPST), 742–751 (YKAKPSYPPT), 752–761 (YKPKPSYASS), 762–771 (YKPKIRYPPT), 772–781 (YKPKPSYASS), 782–791 (YKPKIRYPPT), 792–801 (YKPKPSYASS), 812–821 (YKPKPSYASS), 822–831 (YKPKITYPPT), 832–841 (YKPKISYPPT), 842–851 (YKPKITYPPT), 852–861 (YKPKISYPPA), and 862–871 (YKPKISYPSQ). The tract at residues 124–871 (YKAKTSYPPS…YKPKISYPSQ (748 aa)) is 69 X 10 AA tandem repeats of Y-[KRQ]-[PSTAHQR]-K-[AIPTSKGV]-[STR]-Y-[PTSVA]-[PSTQA]-[STYIPAQ]. Residues 184–192 (YKRKPSYTP) are nonapeptide 1. Positions 213-221 (YKRKPSYTP) are nonapeptide 2. Composition is skewed to pro residues over residues 273–282 (KPKPSYPPTY) and 291–302 (TYKPKPSYPPTY). The interval 273–781 (KPKPSYPPTY…YKPKPSYASS (509 aa)) is disordered. The span at 320–360 (TPYKQKPSYPPIYKSKSSYPTSYKSKKTYPPTYKPKITYPP) shows a compositional bias: low complexity. Residues 361 to 372 (TYKPKPSYPPSY) are compositionally biased toward pro residues. The segment covering 377–390 (TYSPTYKPKITYPP) has biased composition (low complexity). Residues 391–402 (TYKPKPSYPPSY) show a composition bias toward pro residues. A compositionally biased stretch (low complexity) spans 403-450 (KPKTTYPPTYKPKISYPPTYKPKASYVSSYKSKKTYPPTYKPKISYPP). 2 stretches are compositionally biased toward pro residues: residues 451–462 (TYKPKPSYPPTY) and 471–482 (TYKPKPSYPPTY). Low complexity predominate over residues 501–540 (PYKQKPSYPPIYKSKSSYPTSYKSKKTYPPTYKPKITYPP). A compositionally biased stretch (pro residues) spans 541–552 (TYKPKPSYPPSY). Low complexity-rich tracts occupy residues 568–590 (YPPT…TYPP) and 600–640 (TPYK…TYPP). A compositionally biased stretch (pro residues) spans 641–652 (TYKPKPSYPPSY). Low complexity-rich tracts occupy residues 677–690 (SYPP…TYPP) and 698–719 (YPPT…PSYP). The span at 754-763 (PKPSYASSYK) shows a compositional bias: low complexity.

In terms of processing, hydroxylated on proline (mono- or dihydroxylation) and tyrosine residues (to L-DOPA = 3',4'-dihydroxyphenylalanine) of the tandem repeats. In terms of tissue distribution, produced by the byssal gland.

The protein resides in the secreted. Provides adhesiveness to the mussel's foot. Mussels produce one of the strongest water insoluble glues. The mussel's adhesive is a bundle of threads, called a byssus, formed by a fibrous collagenous core coated with adhesive proteins. The polypeptide is Adhesive plaque matrix protein (FP1) (Mytilus coruscus (Sea mussel)).